The chain runs to 1143 residues: DNA-directed RNA polymerase subunit beta (1143 aa).

It belongs to the RNA polymerase beta chain family. As to quaternary structure, in plastids the minimal PEP RNA polymerase catalytic core is composed of four subunits: alpha, beta, beta', and beta''. When a (nuclear-encoded) sigma factor is associated with the core the holoenzyme is formed, which can initiate transcription.

It localises to the plastid. It is found in the chloroplast. The catalysed reaction is RNA(n) + a ribonucleoside 5'-triphosphate = RNA(n+1) + diphosphate. Its function is as follows. DNA-dependent RNA polymerase catalyzes the transcription of DNA into RNA using the four ribonucleoside triphosphates as substrates. The sequence is that of DNA-directed RNA polymerase subunit beta from Porphyra purpurea (Red seaweed).